A 245-amino-acid chain; its full sequence is tRNA1(Val) (adenine(37)-N6)-methyltransferase (245 aa).

Belongs to the methyltransferase superfamily. tRNA (adenine-N(6)-)-methyltransferase family.

It is found in the cytoplasm. It carries out the reaction adenosine(37) in tRNA1(Val) + S-adenosyl-L-methionine = N(6)-methyladenosine(37) in tRNA1(Val) + S-adenosyl-L-homocysteine + H(+). Functionally, specifically methylates the adenine in position 37 of tRNA(1)(Val) (anticodon cmo5UAC). This is tRNA1(Val) (adenine(37)-N6)-methyltransferase from Salmonella enteritidis PT4 (strain P125109).